Here is a 258-residue protein sequence, read N- to C-terminus: Thiazole synthase 2 (258 aa).

The active-site Schiff-base intermediate with DXP is Lys-97. 1-deoxy-D-xylulose 5-phosphate contacts are provided by residues Gly-158, 184–185, and 206–207; these read AG and NT.

This sequence belongs to the ThiG family. Homotetramer. Forms heterodimers with either ThiH or ThiS.

It is found in the cytoplasm. The catalysed reaction is [ThiS sulfur-carrier protein]-C-terminal-Gly-aminoethanethioate + 2-iminoacetate + 1-deoxy-D-xylulose 5-phosphate = [ThiS sulfur-carrier protein]-C-terminal Gly-Gly + 2-[(2R,5Z)-2-carboxy-4-methylthiazol-5(2H)-ylidene]ethyl phosphate + 2 H2O + H(+). The protein operates within cofactor biosynthesis; thiamine diphosphate biosynthesis. Catalyzes the rearrangement of 1-deoxy-D-xylulose 5-phosphate (DXP) to produce the thiazole phosphate moiety of thiamine. Sulfur is provided by the thiocarboxylate moiety of the carrier protein ThiS. In vitro, sulfur can be provided by H(2)S. The chain is Thiazole synthase 2 from Syntrophotalea carbinolica (strain DSM 2380 / NBRC 103641 / GraBd1) (Pelobacter carbinolicus).